The chain runs to 138 residues: ATP synthase epsilon chain (138 aa).

Belongs to the ATPase epsilon chain family. In terms of assembly, F-type ATPases have 2 components, CF(1) - the catalytic core - and CF(0) - the membrane proton channel. CF(1) has five subunits: alpha(3), beta(3), gamma(1), delta(1), epsilon(1). CF(0) has three main subunits: a, b and c.

It localises to the cell inner membrane. In terms of biological role, produces ATP from ADP in the presence of a proton gradient across the membrane. The polypeptide is ATP synthase epsilon chain (Bartonella henselae (strain ATCC 49882 / DSM 28221 / CCUG 30454 / Houston 1) (Rochalimaea henselae)).